A 553-amino-acid chain; its full sequence is CTP synthase (553 aa).

The segment at 1–270 is amidoligase domain; that stretch reads MTKFVFVTGG…DRIICEELRI (270 aa). CTP is bound at residue S13. S13 serves as a coordination point for UTP. ATP contacts are provided by residues 14–19 and D71; that span reads SLGKGI. Mg(2+)-binding residues include D71 and E144. CTP is bound by residues 151 to 153, 191 to 196, and K227; these read DIE and KTKPTQ. Residues 191-196 and K227 each bind UTP; that span reads KTKPTQ. The region spanning 295–547 is the Glutamine amidotransferase type-1 domain; that stretch reads TIGMVGKYVD…VEAALAHQQN (253 aa). G356 is an L-glutamine binding site. C383 serves as the catalytic Nucleophile; for glutamine hydrolysis. Residues 384–387, E407, and R473 contribute to the L-glutamine site; that span reads LGMQ. Active-site residues include H520 and E522.

The protein belongs to the CTP synthase family. Homotetramer.

It catalyses the reaction UTP + L-glutamine + ATP + H2O = CTP + L-glutamate + ADP + phosphate + 2 H(+). It carries out the reaction L-glutamine + H2O = L-glutamate + NH4(+). The catalysed reaction is UTP + NH4(+) + ATP = CTP + ADP + phosphate + 2 H(+). Its pathway is pyrimidine metabolism; CTP biosynthesis via de novo pathway; CTP from UDP: step 2/2. Allosterically activated by GTP, when glutamine is the substrate; GTP has no effect on the reaction when ammonia is the substrate. The allosteric effector GTP functions by stabilizing the protein conformation that binds the tetrahedral intermediate(s) formed during glutamine hydrolysis. Inhibited by the product CTP, via allosteric rather than competitive inhibition. Functionally, catalyzes the ATP-dependent amination of UTP to CTP with either L-glutamine or ammonia as the source of nitrogen. Regulates intracellular CTP levels through interactions with the four ribonucleotide triphosphates. This chain is CTP synthase, found in Ralstonia pickettii (strain 12J).